The chain runs to 197 residues: Dephospho-CoA kinase (197 aa).

The DPCK domain maps to 2–197 (RIGLTGGIAS…YDALAKTAHE (196 aa)). 10 to 15 (ASGKSL) contacts ATP.

This sequence belongs to the CoaE family.

The protein localises to the cytoplasm. The enzyme catalyses 3'-dephospho-CoA + ATP = ADP + CoA + H(+). It participates in cofactor biosynthesis; coenzyme A biosynthesis; CoA from (R)-pantothenate: step 5/5. Functionally, catalyzes the phosphorylation of the 3'-hydroxyl group of dephosphocoenzyme A to form coenzyme A. The polypeptide is Dephospho-CoA kinase (Shouchella clausii (strain KSM-K16) (Alkalihalobacillus clausii)).